We begin with the raw amino-acid sequence, 79 residues long: MVERSQHLQDVFLNTVRKQKISLTIFLVNGVKLTGIVTSFDNFCVLLRRDGHAQLVYKHAISTIMPGQPVQMFEGESSE.

One can recognise a Sm domain in the interval 10-70 (DVFLNTVRKQ…ISTIMPGQPV (61 aa)).

It belongs to the Hfq family. In terms of assembly, homohexamer.

RNA chaperone that binds small regulatory RNA (sRNAs) and mRNAs to facilitate mRNA translational regulation in response to envelope stress, environmental stress and changes in metabolite concentrations. Also binds with high specificity to tRNAs. This is RNA-binding protein Hfq from Bartonella henselae (strain ATCC 49882 / DSM 28221 / CCUG 30454 / Houston 1) (Rochalimaea henselae).